Consider the following 368-residue polypeptide: Peptide chain release factor 2 (368 aa).

The residue at position 250 (Gln-250) is an N5-methylglutamine.

This sequence belongs to the prokaryotic/mitochondrial release factor family. In terms of processing, methylated by PrmC. Methylation increases the termination efficiency of RF2.

It localises to the cytoplasm. Functionally, peptide chain release factor 2 directs the termination of translation in response to the peptide chain termination codons UGA and UAA. This is Peptide chain release factor 2 from Mycolicibacterium smegmatis (strain ATCC 700084 / mc(2)155) (Mycobacterium smegmatis).